Consider the following 184-residue polypeptide: Mitochondrial import inner membrane translocase subunit TIM22 (184 aa).

The segment at 1–26 (MSLWGVYTGPQPPKKPLQEMTQEEQA) is disordered. 2 disulfide bridges follow: cysteine 40–cysteine 118 and cysteine 137–cysteine 156. 2 helical membrane-spanning segments follow: residues 45–65 (VMAGVSGFALGGFFGLFMASM) and 151–171 (AALVGCAGFAAFSLAIDMYLN).

It belongs to the Tim17/Tim22/Tim23 family. Component of the TIM22 complex, whose core is composed of TIM22 and TIM54, associated with the 70 kDa heterohexamer composed of TIM9 and TIM10 (or TIM8 and TIM13).

The protein localises to the mitochondrion inner membrane. In terms of biological role, essential core component of the TIM22 complex, a complex that mediates the import and insertion of multi-pass transmembrane proteins into the mitochondrial inner membrane. In the TIM22 complex, it constitutes the voltage-activated and signal-gated channel. Forms a twin-pore translocase that uses the membrane potential as external driving force in 2 voltage-dependent steps. The sequence is that of Mitochondrial import inner membrane translocase subunit TIM22 from Candida albicans (strain SC5314 / ATCC MYA-2876) (Yeast).